We begin with the raw amino-acid sequence, 484 residues long: D-aminoacylase (484 aa).

This sequence belongs to the metallo-dependent hydrolases superfamily. N-acyl-D-amino-acid deacylase family. Requires Zn(2+) as cofactor.

It is found in the cytoplasm. The catalysed reaction is an N-acyl-D-amino acid + H2O = a D-alpha-amino acid + a carboxylate. Its function is as follows. Has a wide specificity; hydrolyzes N-acyl derivative of neutral D-amino acids. The chain is D-aminoacylase (dan) from Alcaligenes xylosoxydans xylosoxydans (Achromobacter xylosoxidans).